The primary structure comprises 433 residues: Cell division control protein KAR1 (433 aa).

Disordered stretches follow at residues 1–38 (MNVT…SINL), 69–101 (TKNI…FYNG), and 207–227 (KPLP…TLQR). Position 233 is a phosphothreonine (T233).

In terms of assembly, interacts with SPC72.

The protein resides in the cytoplasm. It localises to the cytoskeleton. It is found in the microtubule organizing center. The protein localises to the spindle pole body. In terms of biological role, KAR1 is required for function of both intranuclear and extranuclear microtubules. KAR1 helps localize CDC31 to the spindle pole body (SPB), CDC31 then initiates SPB duplication via interaction with a downstream effector. The polypeptide is Cell division control protein KAR1 (KAR1) (Saccharomyces cerevisiae (strain ATCC 204508 / S288c) (Baker's yeast)).